Here is a 503-residue protein sequence, read N- to C-terminus: Glycerol kinase (503 aa).

Threonine 14 is an ADP binding site. Threonine 14, threonine 15, and serine 16 together coordinate ATP. Threonine 14 is a binding site for sn-glycerol 3-phosphate. ADP is bound at residue arginine 18. Sn-glycerol 3-phosphate is bound by residues arginine 84, glutamate 85, tyrosine 136, and aspartate 246. Positions 84, 85, 136, 246, and 247 each coordinate glycerol. Positions 268 and 311 each coordinate ADP. Residues threonine 268, glycine 311, glutamine 315, and glycine 412 each contribute to the ATP site. 2 residues coordinate ADP: glycine 412 and asparagine 416.

The protein belongs to the FGGY kinase family.

It carries out the reaction glycerol + ATP = sn-glycerol 3-phosphate + ADP + H(+). It participates in polyol metabolism; glycerol degradation via glycerol kinase pathway; sn-glycerol 3-phosphate from glycerol: step 1/1. Inhibited by fructose 1,6-bisphosphate (FBP). Its function is as follows. Key enzyme in the regulation of glycerol uptake and metabolism. Catalyzes the phosphorylation of glycerol to yield sn-glycerol 3-phosphate. The protein is Glycerol kinase of Haemophilus influenzae (strain 86-028NP).